Here is a 435-residue protein sequence, read N- to C-terminus: GTPase Obg (435 aa).

Residues 6-164 (ADFVDRVKIF…RWLELELKIL (159 aa)) form the Obg domain. Positions 165–335 (ADVGLVGYPN…LVSKLASIVR (171 aa)) constitute an OBG-type G domain. Residues 171–178 (GYPNVGKS), 196–200 (FTTLI), 217–220 (DIPG), 287–290 (NKID), and 316–318 (SAV) each bind GTP. Residues Ser-178 and Thr-198 each contribute to the Mg(2+) site. In terms of domain architecture, OCT spans 357 to 435 (RRLPEKFHLE…IGDFEFEYRE (79 aa)).

The protein belongs to the TRAFAC class OBG-HflX-like GTPase superfamily. OBG GTPase family. As to quaternary structure, monomer. Mg(2+) is required as a cofactor.

The protein localises to the cytoplasm. An essential GTPase which binds GTP, GDP and possibly (p)ppGpp with moderate affinity, with high nucleotide exchange rates and a fairly low GTP hydrolysis rate. Plays a role in control of the cell cycle, stress response, ribosome biogenesis and in those bacteria that undergo differentiation, in morphogenesis control. In Thermotoga petrophila (strain ATCC BAA-488 / DSM 13995 / JCM 10881 / RKU-1), this protein is GTPase Obg.